We begin with the raw amino-acid sequence, 600 residues long: Proton channel OTOP1 (600 aa).

Residues 1 to 50 (MPGGPGAPSSPAASSGSSRAAPSGIAACPLSPPPLARGSPQASGPRRGAS) are disordered. At 1-56 (MPGGPGAPSSPAASSGSSRAAPSGIAACPLSPPPLARGSPQASGPRRGASVPQKLA) the chain is on the cytoplasmic side. Over residues 7-27 (APSSPAASSGSSRAAPSGIAA) the composition is skewed to low complexity. Residues 57 to 78 (ETLSSQYGLNVFVAGLLFLLAW) form a helical membrane-spanning segment. Residues 79–86 (AVHATGVG) lie on the Extracellular side of the membrane. A helical transmembrane segment spans residues 87–110 (KSDLLCVLTALMLLQLLWMLWYVG). At 111 to 128 (RSYMQRRLIRPKDTHAGA) the chain is on the cytoplasmic side. The chain crosses the membrane as a helical span at residues 129–151 (RWLRGSITLFAFITVVLGCLKVA). Topologically, residues 152 to 161 (YFIGFSECLS) are extracellular. Residues 162–186 (ATEGVFPVTHAVHTLLQVYFLWGHA) form a helical membrane-spanning segment. Topologically, residues 187–194 (KDIIMSFK) are cytoplasmic. The helical transmembrane segment at 195–217 (TLERFGVIHSVFTNLLLWANSVL) threads the bilayer. Over 218–262 (NESKHQLNEHKERLITLGFGNITIVLDDHTPQCNCTPPALCSALS) the chain is Extracellular. A helical transmembrane segment spans residues 263-288 (HGIYYLYPFNIEYQILASTMLYVLWK). At 289-309 (NIGRRVDSSQHQKMQCRFDGV) the chain is on the cytoplasmic side. The helical transmembrane segment at 310-332 (LVGSVLGLTVLAATIAVVVVYMI) threads the bilayer. At 333–342 (HIGRSKSKSE) the chain is on the extracellular side. The chain crosses the membrane as a helical span at residues 343 to 368 (SALIMFYLYAITVLLLMGAAGLVGSW). The Cytoplasmic segment spans residues 369 to 386 (IYRVDEKSLDESKNPARK). A helical membrane pass occupies residues 387-411 (LDVDLLVATGSGSWLLSWGSILAIA). Over 412-421 (CAETRPPYTW) the chain is Extracellular. Residues 422 to 442 (YNLPYSVLVIVEKYVQNIFII) traverse the membrane as a helical segment. Over 443–532 (ESVHLEPEGV…QGGMKRRLLR (90 aa)) the chain is Cytoplasmic. The helical transmembrane segment at 533 to 551 (NITAFLFLCNISLWIPPAF) threads the bilayer. The Extracellular portion of the chain corresponds to 552-569 (GCRPEYDNGLEEIVFGFE). A helical transmembrane segment spans residues 570-593 (PWIIVVNLAMPFSIFYRMHAAAAL). Topologically, residues 594-600 (FEVYCKI) are cytoplasmic.

This sequence belongs to the otopetrin family. In terms of assembly, homodimer. Interacts with STAT1, independently of STAT1 phosphorylation status. Expressed in thymus, heart, kidney, skin, vestibular system of the inner ear, sour taste cells, heart, uterus, dorsal root ganglion, adrenal gland, lactating mammary gland and stimulated mast cells. In the inner ear, expressed in the supporting cells in extrastriolar regions of the saccule and in the utricle, but not in the cochlea. Expressed in brown adipose tissue. Expressed in epididymal white adipose tissue (eWAT), as well as in inguinal fat, in obese animals, but hardly detectable in eWAT from lean mice. Expressed in acid-sensing taste receptor cells (PKD2L1-positive cells), but not in other types of taste cells (at protein level).

It is found in the cell membrane. The protein localises to the cell projection. It localises to the microvillus. The enzyme catalyses H(+)(in) = H(+)(out). Activated by both acid and alkali, with proton influx in response to extracellular acid and proton efflux during alkali stimulation. Inhibited by Zn(2+); this inhibition is thought to be pH-sensitive. Currents evoked in response to mild acid (pH 6.0) stimulus may also be mildly potentiated by exposure to Zn(2+). Activated by NH(4)Cl. Proton-selective ion channel. Biphasically modulated by acid and alkali, mediating proton influx and efflux in response to extracellular acid and base stimulation, respectively. Sour taste receptor, which carries inward currents in response to extracellular acidification. Sensor for ammonium chloride (NH(4)Cl) in taste receptor cells. NH(4)Cl acts by increasing the intracellular pH, thereby generating a driving force for proton entry through OTOP1 channel. Might also participate in alkaline sensation. Plays a role in the regulation of Ca(2+) flux in response to purigenic (ATP, ADP and UDP) stimuli, leading to increase in cytosolic Ca(2+) due to influx of extracellular calcium. May play this role by inhibiting P2Y purinoceptor-mediated Ca(2+) release in a Ca(2+)-dependent manner and promote an influx of Ca(2+) in response to ATP. Through this mechanism and possibly others, plays a role in the formation and function of calcium carbonate-based structures in the vestibular system of the inner ear, called otoconia, that sense gravity and linear acceleration. In obesity, may attenuate adipose tissue inflammation, through the negative regulation of IFNG signaling, hence may play an adaptive role in the maintainance of metabolic homeostasis. Following alkali activation, may also be permeable Na(+), K(+), Cs(+) and Li(+). In Mus musculus (Mouse), this protein is Proton channel OTOP1.